We begin with the raw amino-acid sequence, 257 residues long: 5'-nucleotidase SurE (257 aa).

The a divalent metal cation site is built by Asp15, Asp16, Ser46, and Asn99.

This sequence belongs to the SurE nucleotidase family. A divalent metal cation is required as a cofactor.

Its subcellular location is the cytoplasm. The enzyme catalyses a ribonucleoside 5'-phosphate + H2O = a ribonucleoside + phosphate. In terms of biological role, nucleotidase that shows phosphatase activity on nucleoside 5'-monophosphates. In Aliivibrio fischeri (strain ATCC 700601 / ES114) (Vibrio fischeri), this protein is 5'-nucleotidase SurE.